We begin with the raw amino-acid sequence, 141 residues long: Large ribosomal subunit protein uL11 (141 aa).

It belongs to the universal ribosomal protein uL11 family. Part of the ribosomal stalk of the 50S ribosomal subunit. Interacts with L10 and the large rRNA to form the base of the stalk. L10 forms an elongated spine to which L12 dimers bind in a sequential fashion forming a multimeric L10(L12)X complex. Post-translationally, one or more lysine residues are methylated.

In terms of biological role, forms part of the ribosomal stalk which helps the ribosome interact with GTP-bound translation factors. The protein is Large ribosomal subunit protein uL11 of Thermosipho africanus (strain TCF52B).